Here is a 475-residue protein sequence, read N- to C-terminus: Vitronectin (475 aa).

The N-terminal stretch at 1-19 (MAPLRPIFTLALLLWVVLA) is a signal peptide. The region spanning 20–63 (DQESCKDRCTEGFNANRKCQCDELCSYYQSCCADYAAECKPQVT) is the SMB domain. Disulfide bonds link cysteine 24–cysteine 28, cysteine 24–cysteine 40, cysteine 28–cysteine 58, cysteine 38–cysteine 40, cysteine 38–cysteine 51, cysteine 44–cysteine 50, and cysteine 51–cysteine 58. Residues 64–66 (RGD) carry the Cell attachment site motif. Threonine 69 carries the phosphothreonine modification. Tyrosine 75, tyrosine 78, and tyrosine 80 each carry sulfotyrosine. Residue asparagine 87 is glycosylated (N-linked (GlcNAc...) asparagine). The interval 87–123 (NASVHAQPESPTVGQEPTLSPDLQTEGGAEPTHEVPL) is disordered. Residues 95–109 (ESPTVGQEPTLSPDL) show a composition bias toward polar residues. Hemopexin repeat units lie at residues 158 to 202 (GKPF…VWGI), 203 to 250 (EGPI…FSGI), and 251 to 305 (PDNV…FEHF). Asparagine 169 and asparagine 242 each carry an N-linked (GlcNAc...) asparagine glycan. Residues tyrosine 279 and tyrosine 282 each carry the sulfotyrosine modification. Phosphoserine is present on serine 312. Residues 359–391 (LTPSPSAKKQKSRRRSRKRYRSRYGRGRSQNSR) are disordered. A compositionally biased stretch (basic residues) spans 366–384 (KKQKSRRRSRKRYRSRYGR). The tract at residues 366–392 (KKQKSRRRSRKRYRSRYGRGRSQNSRR) is glycosaminoglycan binding region. Serine 394 is modified (phosphoserine). A Hemopexin 4 repeat occupies 419-469 (TSWLKPATSEPIQSVYFFSGDKYYRVNLRTQRVDTVNPPYPRSIAQYWLGC).

As to quaternary structure, interacts with SERPINE1/PAI1 and C1QBP. Monomer. Sulfated on tyrosine residues. In terms of processing, N- and O-glycosylated. Post-translationally, it has been suggested that the active SMB domain may be permitted considerable disulfide bond heterogeneity or variability, thus two alternate disulfide patterns based on 3D structures are described with 1 disulfide bond conserved in both. As to expression, plasma.

The protein localises to the secreted. The protein resides in the extracellular space. Functionally, vitronectin is a cell adhesion and spreading factor found in serum and tissues. Vitronectin interact with glycosaminoglycans and proteoglycans. Is recognized by certain members of the integrin family and serves as a cell-to-substrate adhesion molecule. Inhibitor of the membrane-damaging effect of the terminal cytolytic complement pathway. This Oryctolagus cuniculus (Rabbit) protein is Vitronectin (VTN).